We begin with the raw amino-acid sequence, 232 residues long: uncharacterized protein (232 aa).

Positions 1–46 (MNAHNMRGPPGDLAKVVPGSRSGWNEGSRCRQADKGDGQCRNGGRD) are disordered. Over residues 28 to 46 (SRCRQADKGDGQCRNGGRD) the composition is skewed to basic and acidic residues.

This is an uncharacterized protein from Rhizobium meliloti (Ensifer meliloti).